The sequence spans 372 residues: MSNDKDSFNVSDLTAALKDEDRAGLVNALKNKLQNLAGQRSDVLENLTPNVRKRVDALRDIQSQHDELEAKFREERAILEAKYQTLYQPLYVKRYEIVNGTTEVELAPEDDTKVDQGEEKTAEEKGVPSFWLTALKNNDVISEEVTERDEGALKYLKDIKWCKIEEPKGFKLEFFFDTNPYFKNTVLTKSYHMIDEDEPLLEKAMGTEIDWYPGKCLTQKILKKKPKKGSKNTKPITKLEDCESFFNFFSPPEVPDEDEDIDEERAEDLQNLMEQDYDIGSTIREKIIPRAVSWFTGEAMEAEDFEIDDDEEDDIDEDEDEEDEEDEEDDDDEDEEESKTKKKPSIGNKKGGRSQIVGEGKQDERPPECKQQ.

Residues 26-80 are a coiled coil; sequence VNALKNKLQNLAGQRSDVLENLTPNVRKRVDALRDIQSQHDELEAKFREERAILE. Ser41 carries the post-translational modification Phosphoserine. Positions 47–62 match the Nuclear export signal motif; sequence LTPNVRKRVDALRDIQ. A Nuclear localization signal motif is present at residues 223–228; sequence KKKPKK. The disordered stretch occupies residues 299–372; that stretch reads AMEAEDFEID…DERPPECKQQ (74 aa). Over residues 300–337 the composition is skewed to acidic residues; sequence MEAEDFEIDDDEEDDIDEDEDEEDEEDEEDDDDEDEEE. Basic and acidic residues predominate over residues 360 to 372; sequence GKQDERPPECKQQ. Cys369 carries the post-translational modification Cysteine methyl ester. Cys369 carries S-farnesyl cysteine lipidation. A propeptide spans 370–372 (removed in mature form); the sequence is KQQ.

The protein belongs to the nucleosome assembly protein (NAP) family. In terms of assembly, can form homomeric and heteromeric protein complexes with NAP1;2, NAP1;3 and NAP1;4. Binds histone H2A. Interacts with PP438/PNM1. In terms of processing, prenylation of the protein is required for its function during the cell proliferation phase of leaf development. As to expression, ubiquitous.

It localises to the nucleus. It is found in the cytoplasm. Functionally, may modulate chromatin structure by regulation of nucleosome assembly/disassembly. Contributes to the regulation of cell proliferation and cell expansion. May function in nucleotide excision repair (NER). Involved in somatic homologous recombination. The chain is Nucleosome assembly protein 1;1 (NAP1;1) from Arabidopsis thaliana (Mouse-ear cress).